Consider the following 113-residue polypeptide: Hydrogenase maturation factor HypA (113 aa).

Residue histidine 2 coordinates Ni(2+). Cysteine 70, cysteine 73, cysteine 86, and cysteine 88 together coordinate Zn(2+).

It belongs to the HypA/HybF family.

Functionally, involved in the maturation of [NiFe] hydrogenases. Required for nickel insertion into the metal center of the hydrogenase. This chain is Hydrogenase maturation factor HypA, found in Trichormus variabilis (strain ATCC 29413 / PCC 7937) (Anabaena variabilis).